Consider the following 244-residue polypeptide: Probable transcriptional regulatory protein DR_2548 (244 aa).

The disordered stretch occupies residues 1 to 23 (MAGHSKWAQIKRKKGANDKKRSA).

The protein belongs to the TACO1 family.

It localises to the cytoplasm. The polypeptide is Probable transcriptional regulatory protein DR_2548 (Deinococcus radiodurans (strain ATCC 13939 / DSM 20539 / JCM 16871 / CCUG 27074 / LMG 4051 / NBRC 15346 / NCIMB 9279 / VKM B-1422 / R1)).